Reading from the N-terminus, the 704-residue chain is MPNLLLELRSEEIPARMQRKAAGDLKKLVTDALVEAGLSYEGAREYWTPRRLALDIHGLTARSADVREERKGPRTDANEKAIEGFLRGAGLSSVSEAQVVSDPKKGDFYVAVISKPGRATEEIVAEVMPGIIRDFPWPKSMRWGKASSKSGALRWVRPLQSIVCTFGPEHEETTVIPFEIDGITASNITYGHRFHAPEAITVRRFDDYAASLEKAKVILDAERRKDIILHDARDIAFANGLELVEDEGLLEEVSGLVEWPQVLMGSFEEDYLSIPSEIIRLTIKTNQKCFVTRKQGEDTLSNRFILVSNIQAHDGGKEIVHGNGKVVRARLSDALHFWKRDQGNLPDLETLAASAAKFGLDLQKPLDQRMAKLDALDVTFHAKLGTQGARVARIRALAKELAAITGADPALTDRAAVLAKADLRTEAVGEFPELQGLMGRKYAVLQGENASVAAAVEDHYKPQGPSDRVPEDKVAITLALADKLDTLTGFWAIDEKPTGSKDPFALRRAALGVVRILLERRVRLPLLATTRDGDLLSFFHDRLKVYLRDQGARYDLIDAVLTPDADDLLMVARRVEALTAFITSEDGKNLLAGTKRATQLLAAEEKKGTVIADGVSPALLKLDAEKELFAAISSASKDAADAVAGEDFRSAMEALSKLRGPVDRFFEEVLVNDEDAAIRANRLALLRLIREATGTVADFSKISG.

It belongs to the class-II aminoacyl-tRNA synthetase family. Tetramer of two alpha and two beta subunits.

It is found in the cytoplasm. The catalysed reaction is tRNA(Gly) + glycine + ATP = glycyl-tRNA(Gly) + AMP + diphosphate. The protein is Glycine--tRNA ligase beta subunit of Rhizobium etli (strain CIAT 652).